The primary structure comprises 28 residues: RDPTGCEVDQVIMVKRHGERYPSPSAGK.

Residues 1–28 form a disordered region; that stretch reads RDPTGCEVDQVIMVKRHGERYPSPSAGK. The active-site Nucleophile is His17.

This sequence belongs to the histidine acid phosphatase family.

The enzyme catalyses 1D-myo-inositol hexakisphosphate + H2O = 1D-myo-inositol 1,2,4,5,6-pentakisphosphate + phosphate. Its function is as follows. Catalyzes the hydrolysis of inorganic orthophosphate from phytate. The protein is 3-phytase B (phyB) of Aspergillus ficuum.